The chain runs to 816 residues: MLFNINRQEDDPFTQLINQSSANTQNQQAHQQESPYQFLQKVVSNEPKGKEEWVSPFRQDALANRQNNRAYGEDAKNRKFPTVSATSAYSKQQPKDLGYKNIPKNAKRAKDIRFPTYLTQNEERQYQLLTELELKEKHLKYLKKCQKITDLTKDEKDDTDTTTSSSTSTSSSSSSSSSSSSSSSSDEGDVTSTTTSEATEATADTATTTTTTTSTSTTSTSTTNAVENSADEATSVEEEHEDKVSESTSIGKGTADSAQINVAEPISSENGVLEPRTTDQSGGSKSGVVPTDEQKEEKSDVKKVNPPSGEEKKEVEAEGDAEEETEQSSAEESAERTSTPETSEPESEEDESPIDPSKAPKVPFQEPSRKERTGIFALWKSPTSSSTQKSKTAAPSNPVATPENPELIVKTKEHGYLSKAVYDKINYDEKIHQAWLADLRAKEKDKYDAKNKEYKEKLQDLQNQIDEIENSMKAMREETSEKIEVSKNRLVKKIIDVNAEHNNKKLMILKDTENMKNQKLQEKNEVLDKQTNVKSEIDDLNNEKTNVQKEFNDWTTNLSNLSQQLDAQIFKINQINLKQGKVQNEIDNLEKKKEDLVTQTEENKKLHEKNVQVLESVENKEYLPQINDIDNQISSLLNEVTIIKQENANEKTQLSAITKRLEDERRAHEEQLKLEAEERKRKEENLLEKQRQELEEQAHQAQLDHEQQITQVKQTYNDQLTELQDKLATEEKELEAVKRERTRLQAEKAIEEQTRQKNADEALKQEILSRQHKQAEGIHAAENHKIPNDRSQKNTSVLPKDDSLYEYHTEEDVMYA.

Disordered regions lie at residues M1–S34, R65–N101, D154–E406, and R770–A816. A compositionally biased stretch (low complexity) spans N18–Q32. Positions V83–Q92 are enriched in polar residues. Residues T161–T223 show a composition bias toward low complexity. The span at E246 to I260 shows a compositional bias: polar residues. S286 is subject to Phosphoserine. Residues D292–E316 show a composition bias toward basic and acidic residues. The segment covering A317 to E326 has biased composition (acidic residues). Low complexity predominate over residues Q327–T342. Residues S343 and S347 each carry the phosphoserine modification. The span at S343–P353 shows a compositional bias: acidic residues. A compositionally biased stretch (low complexity) spans K380–S396. Composition is skewed to basic and acidic residues over residues R770 to Q792 and P799 to A816. T809 bears the Phosphothreonine mark.

Post-translationally, pyrophosphorylated by 5-diphosphoinositol pentakisphosphate (5-IP7). Serine pyrophosphorylation is achieved by Mg(2+)-dependent, but enzyme independent transfer of a beta-phosphate from a inositol pyrophosphate to a pre-phosphorylated serine residue.

This is an uncharacterized protein from Saccharomyces cerevisiae (strain ATCC 204508 / S288c) (Baker's yeast).